An 85-amino-acid polypeptide reads, in one-letter code: Protein MANBAL (85 aa).

A helical transmembrane segment spans residues 24–44; that stretch reads YGLFLGAIFQLICVLAIIVPI. Residues 49–64 show a composition bias toward basic and acidic residues; the sequence is EAEAEQAEPRSAEGPK. Positions 49-85 are disordered; sequence EAEAEQAEPRSAEGPKKPKAAIASTNKRPKKETKKKR. The span at 75 to 85 shows a compositional bias: basic residues; the sequence is KRPKKETKKKR.

Belongs to the UPF0239 family.

It is found in the membrane. This is Protein MANBAL (Manbal) from Mus musculus (Mouse).